Reading from the N-terminus, the 97-residue chain is Co-chaperonin GroES (97 aa).

This sequence belongs to the GroES chaperonin family. In terms of assembly, heptamer of 7 subunits arranged in a ring. Interacts with the chaperonin GroEL.

It is found in the cytoplasm. Its function is as follows. Together with the chaperonin GroEL, plays an essential role in assisting protein folding. The GroEL-GroES system forms a nano-cage that allows encapsulation of the non-native substrate proteins and provides a physical environment optimized to promote and accelerate protein folding. GroES binds to the apical surface of the GroEL ring, thereby capping the opening of the GroEL channel. This chain is Co-chaperonin GroES, found in Symbiobacterium thermophilum (strain DSM 24528 / JCM 14929 / IAM 14863 / T).